We begin with the raw amino-acid sequence, 163 residues long: ATP synthase subunit b, sodium ion specific (163 aa).

A helical transmembrane segment spans residues 9–29; it reads VSIDINMFWQIINFLILMFFF.

Belongs to the ATPase B chain family. F-type ATPases have 2 components, F(1) - the catalytic core - and F(0) - the membrane proton channel. F(1) has five subunits: alpha(3), beta(3), gamma(1), delta(1), epsilon(1). F(0) has three main subunits: a(1), b(2) and c(10-14). The alpha and beta chains form an alternating ring which encloses part of the gamma chain. F(1) is attached to F(0) by a central stalk formed by the gamma and epsilon chains, while a peripheral stalk is formed by the delta and b chains.

The protein resides in the cell inner membrane. In terms of biological role, f(1)F(0) ATP synthase produces ATP from ADP in the presence of a proton or sodium gradient. F-type ATPases consist of two structural domains, F(1) containing the extramembraneous catalytic core and F(0) containing the membrane proton channel, linked together by a central stalk and a peripheral stalk. During catalysis, ATP synthesis in the catalytic domain of F(1) is coupled via a rotary mechanism of the central stalk subunits to proton translocation. Component of the F(0) channel, it forms part of the peripheral stalk, linking F(1) to F(0). In Ilyobacter tartaricus, this protein is ATP synthase subunit b, sodium ion specific (atpF).